Reading from the N-terminus, the 257-residue chain is Meiotically up-regulated gene 14 protein (257 aa).

Its subcellular location is the cytoplasm. It localises to the nucleus. In terms of biological role, has a role in meiosis. The chain is Meiotically up-regulated gene 14 protein (mug14) from Schizosaccharomyces pombe (strain 972 / ATCC 24843) (Fission yeast).